The primary structure comprises 172 residues: Adenine phosphoribosyltransferase (172 aa).

This sequence belongs to the purine/pyrimidine phosphoribosyltransferase family. Homodimer.

It is found in the cytoplasm. The enzyme catalyses AMP + diphosphate = 5-phospho-alpha-D-ribose 1-diphosphate + adenine. The protein operates within purine metabolism; AMP biosynthesis via salvage pathway; AMP from adenine: step 1/1. Functionally, catalyzes a salvage reaction resulting in the formation of AMP, that is energically less costly than de novo synthesis. This chain is Adenine phosphoribosyltransferase, found in Herpetosiphon aurantiacus (strain ATCC 23779 / DSM 785 / 114-95).